A 128-amino-acid chain; its full sequence is Modulator protein MzrA (128 aa).

At 1–11 the chain is on the cytoplasmic side; the sequence is MMVMKRPSLRQ. A helical transmembrane segment spans residues 12 to 32; sequence FSWLLGGSLLLGALFWLWLAV. Residues 33 to 128 lie on the Periplasmic side of the membrane; it reads QQQEATLAIR…RLRDAPHRLG (96 aa).

This sequence belongs to the MzrA family. Interacts with EnvZ.

The protein localises to the cell inner membrane. Its function is as follows. Modulates the activity of the EnvZ/OmpR two-component regulatory system, probably by directly modulating EnvZ enzymatic activity and increasing stability of phosphorylated OmpR. This Klebsiella pneumoniae subsp. pneumoniae (strain ATCC 700721 / MGH 78578) protein is Modulator protein MzrA.